The chain runs to 319 residues: ATP-dependent 6-phosphofructokinase (319 aa).

Residue glycine 11 participates in ATP binding. Residue 21 to 25 (RAVVR) coordinates ADP. Residues 72–73 (RC) and 102–105 (GDGS) each bind ATP. Aspartate 103 is a binding site for Mg(2+). Residue 125 to 127 (TID) coordinates substrate. Aspartate 127 (proton acceptor) is an active-site residue. Arginine 154 serves as a coordination point for ADP. Substrate contacts are provided by residues arginine 162 and 169 to 171 (MGR). ADP is bound by residues 185-187 (GAE), arginine 211, and 213-215 (KLH). Substrate contacts are provided by residues glutamate 222, arginine 243, and 249-252 (HIQR).

Belongs to the phosphofructokinase type A (PFKA) family. ATP-dependent PFK group I subfamily. Prokaryotic clade 'B1' sub-subfamily. As to quaternary structure, homotetramer. Mg(2+) serves as cofactor.

The protein localises to the cytoplasm. The enzyme catalyses beta-D-fructose 6-phosphate + ATP = beta-D-fructose 1,6-bisphosphate + ADP + H(+). The protein operates within carbohydrate degradation; glycolysis; D-glyceraldehyde 3-phosphate and glycerone phosphate from D-glucose: step 3/4. With respect to regulation, allosterically activated by ADP and other diphosphonucleosides, and allosterically inhibited by phosphoenolpyruvate. Functionally, catalyzes the phosphorylation of D-fructose 6-phosphate to fructose 1,6-bisphosphate by ATP, the first committing step of glycolysis. The polypeptide is ATP-dependent 6-phosphofructokinase (Alkaliphilus metalliredigens (strain QYMF)).